We begin with the raw amino-acid sequence, 494 residues long: Smoothelin-like protein 1 (494 aa).

4 stretches are compositionally biased toward basic and acidic residues: residues 1–10 (MEQKEGKLSE), 74–104 (DEVK…KEET), 112–166 (TGRK…KATV), and 179–232 (TGQR…KEEA). A disordered region spans residues 1-348 (MEQKEGKLSE…ARPRGPRAQN (348 aa)). Positions 123–145 (KEAEEKESTLASEKQKAEEKEAK) form a coiled coil. Acidic residues predominate over residues 233–255 (DAKEEAEDAEEAEPGSPSEEQEQ). 2 stretches are compositionally biased toward low complexity: residues 269-279 (PSSPEEWPESP) and 302-314 (SPSA…SDVP). Residues 324–335 (GEKKEKAPERRV) show a composition bias toward basic and acidic residues. Ser-336 bears the Phosphoserine mark. The Calponin-homology (CH) domain maps to 378–484 (GGVKNMLLEW…YIQELYRSLV (107 aa)). The segment at 476-494 (IQELYRSLVQKGLVKTKKK) is calmodulin-binding.

Belongs to the smoothelin family. In terms of assembly, interacts with PPP1R12A. Post-translationally, maximal phosphorylation of Ser-336 correlates with maximal relaxation of aorta in response to acetylcholine. Expressed in striated muscles, specifically in type 2a fibers (at protein level).

Its subcellular location is the cytoplasm. The protein localises to the myofibril. It localises to the sarcomere. The protein resides in the i band. It is found in the m line. Its subcellular location is the nucleus. In terms of biological role, plays a role in the regulation of contractile properties of both striated and smooth muscles. When unphosphorylated, may inhibit myosin dephosphorylation. Phosphorylation at Ser-299 reduces this inhibitory activity. The chain is Smoothelin-like protein 1 (SMTNL1) from Homo sapiens (Human).